A 139-amino-acid polypeptide reads, in one-letter code: Putative pre-16S rRNA nuclease (139 aa).

Belongs to the YqgF nuclease family.

The protein resides in the cytoplasm. Functionally, could be a nuclease involved in processing of the 5'-end of pre-16S rRNA. This chain is Putative pre-16S rRNA nuclease, found in Pectobacterium atrosepticum (strain SCRI 1043 / ATCC BAA-672) (Erwinia carotovora subsp. atroseptica).